The following is a 1026-amino-acid chain: Multidrug resistance protein MdtC (1026 aa).

The next 11 helical transmembrane spans lie at 15–35 (ILIAAAITLCGILGFRLLPVA), 333–353 (EVEETLAISVALVILVVFLFL), 360–380 (LIPAVAVPVSLIGTFAAMYLC), 387–407 (LSLMALTIATGFVVDDAIVVL), 431–451 (VGFTVISMSLSLVAVFLPLLL), 463–483 (FAVTLSVAIGISLVVSLTLTP), 528–548 (LVGVVFLGTVALNIWLYIAIP), 853–873 (LILIVAAIATVYIVLGILYES), 897–917 (LFNAPFSLIALIGIMLLIGIV), 953–973 (PIMMTTLAALFGALPLVLSGG), and 984–1004 (ITIVGGLVMSQLLTLYTTPVV).

It belongs to the resistance-nodulation-cell division (RND) (TC 2.A.6) family. MdtC subfamily. In terms of assembly, part of a tripartite efflux system composed of MdtA, MdtB and MdtC. MdtC forms a heteromultimer with MdtB.

It localises to the cell inner membrane. The chain is Multidrug resistance protein MdtC from Salmonella enteritidis PT4 (strain P125109).